Reading from the N-terminus, the 217-residue chain is Formate dehydrogenase, nitrate-inducible, cytochrome b556(Fdn) subunit (217 aa).

Residues methionine 1–lysine 11 lie on the Cytoplasmic side of the membrane. A helical membrane pass occupies residues phenylalanine 12–phenylalanine 36. Heme b is bound at residue histidine 18. Residues phenylalanine 37–methionine 52 lie on the Periplasmic side of the membrane. A helical membrane pass occupies residues glycine 53–arginine 74. Histidine 57 lines the heme b pocket. At phenylalanine 75–asparagine 110 the chain is on the cytoplasmic side. Residues alanine 111–isoleucine 134 form a helical membrane-spanning segment. The Periplasmic portion of the chain corresponds to tryptophan 135 to tyrosine 150. Residues serine 151–tryptophan 175 traverse the membrane as a helical segment. 2 residues coordinate heme b: histidine 155 and histidine 169. Residue histidine 169 coordinates a menaquinone. Residues valine 176 to isoleucine 217 are Cytoplasmic-facing.

This sequence belongs to the formate dehydrogenase gamma subunit family. As to quaternary structure, trimer of heterotrimers, consisting of subunits alpha, beta and gamma. Heme is required as a cofactor.

It is found in the cell inner membrane. Formate dehydrogenase allows the bacterium to use formate as major electron donor during anaerobic respiration, when nitrate is used as electron acceptor. Subunit gamma is the cytochrome b556 component of the formate dehydrogenase-N, and also contains a menaquinone reduction site that receives electrons from the beta subunit (FdnH), through its hemes. Formate dehydrogenase-N is part of a system that generates proton motive force, together with the dissimilatory nitrate reductase (Nar). The chain is Formate dehydrogenase, nitrate-inducible, cytochrome b556(Fdn) subunit (fdnI) from Escherichia coli O157:H7.